Consider the following 785-residue polypeptide: Ubiquitin carboxyl-terminal hydrolase 1 (785 aa).

Disordered stretches follow at residues M1–N21 and T33–Y52. Over residues S7–S16 the composition is skewed to polar residues. S16, S42, and S67 each carry phosphoserine. In terms of domain architecture, USP spans V81–L785. C90 functions as the Nucleophile in the catalytic mechanism. Composition is skewed to basic and acidic residues over residues E258–T275 and L286–R298. The interval E258–R336 is disordered. Phosphoserine occurs at positions 313 and 475. Catalysis depends on H593, which acts as the Proton acceptor. The segment at T693 to G723 is disordered. The span at G708–S719 shows a compositional bias: basic and acidic residues. Residue S768 is modified to Phosphoserine.

This sequence belongs to the peptidase C19 family. Interacts with FANCD2 and PCNA. Interacts with WDR48. Interacts with ATAD5; the interaction regulates USP1-mediated PCNA deubiquitination. In terms of processing, autocatalytic cleavage of USP1 following UV irradiation inactivates it, leading to an increase in ubiquitinated PCNA, recruitment of POLH and translesion synthesis. Post-translationally, ubiquitinated by the CRL2(KLHDC2) complex following autocatalytic cleavage, leading to its degradation: the CRL2(KLHDC2) complex recognizes the diglycine (Gly-Gly) at the C-terminus.

Its subcellular location is the nucleus. The enzyme catalyses Thiol-dependent hydrolysis of ester, thioester, amide, peptide and isopeptide bonds formed by the C-terminal Gly of ubiquitin (a 76-residue protein attached to proteins as an intracellular targeting signal).. Functionally, negative regulator of DNA damage repair which specifically deubiquitinates monoubiquitinated FANCD2. Also involved in PCNA-mediated translesion synthesis (TLS) by deubiquitinating monoubiquitinated PCNA. Has almost no deubiquitinating activity by itself and requires the interaction with WDR48 to have a high activity. This is Ubiquitin carboxyl-terminal hydrolase 1 (USP1) from Homo sapiens (Human).